Reading from the N-terminus, the 118-residue chain is uncharacterized protein (118 aa).

The next 2 membrane-spanning stretches (helical) occupy residues 7–27 (VIVK…FIIE) and 34–58 (VFVA…AIIF).

It is found in the membrane. This is an uncharacterized protein from Saccharomyces cerevisiae (strain ATCC 204508 / S288c) (Baker's yeast).